The primary structure comprises 281 residues: MPPAGSLTDEQLRFFDANGYLVLGSFSSAEEVRAMRDRMAELVDGFDGAGDVFSTKDHRQVKNDFFFKSAENISFFFEEKAFGDDGCLKQAKELSINKVGHALHELDPVFKKFSFGANVSSLFSSLRYKRPAVIQSMYIFKQPGIGGEVVPHQDNTFLYTDPPSCTGLWLALEDATKTNGCLWAIPGSHKNGLKRRMIRDEIDTHFDHPSPTYDLKEFVPLEVKSGDLVVIHGDLIHQSFENLSPVSRHALSLHVIDTEGCEWSKQNWLQRKIPPQPLYEN.

Residues Lys98, Met137, His152 to Asp154, and Trp169 contribute to the 2-oxoglutarate site. Fe cation contacts are provided by His152 and Asp154. Fe cation is bound at residue His237. Positions 239 and 248 each coordinate 2-oxoglutarate.

The protein belongs to the PhyH family. Fe cation serves as cofactor. L-ascorbate is required as a cofactor.

The catalysed reaction is phytanoyl-CoA + 2-oxoglutarate + O2 = 2-hydroxyphytanoyl-CoA + succinate + CO2. Its pathway is lipid metabolism; fatty acid metabolism. In terms of biological role, converts phytanoyl-CoA to 2-hydroxyphytanoyl-CoA. The sequence is that of Phytanoyl-CoA dioxygenase 1 from Oryza sativa subsp. japonica (Rice).